A 213-amino-acid chain; its full sequence is Uridine kinase (213 aa).

12 to 19 (GGSCSGKT) serves as a coordination point for ATP.

The protein belongs to the uridine kinase family.

Its subcellular location is the cytoplasm. It carries out the reaction uridine + ATP = UMP + ADP + H(+). It catalyses the reaction cytidine + ATP = CMP + ADP + H(+). Its pathway is pyrimidine metabolism; CTP biosynthesis via salvage pathway; CTP from cytidine: step 1/3. The protein operates within pyrimidine metabolism; UMP biosynthesis via salvage pathway; UMP from uridine: step 1/1. The polypeptide is Uridine kinase (udk) (Mycoplasma genitalium (strain ATCC 33530 / DSM 19775 / NCTC 10195 / G37) (Mycoplasmoides genitalium)).